Consider the following 200-residue polypeptide: BREX protein BrxA (200 aa).

It belongs to the BrxA family.

In terms of biological role, BREX systems (bacteriophage exclusion) provide immunity against bacteriophage. Part of a type 1 BREX system. This system allows phage adsorption but prevents phage DNA replication, without degradation of the phage DNA. Methylation of bacterial DNA by PglX probably guides self/non-self discrimination. When the brxA-brxB-brxC-pglX and pglZ-brxL operons are transformed into a susceptible B.subtilis strain (BEST7003) they confer resistance to bacteriophages SPbeta, SP16, Zeta, phi3T and SP02 and partial protection to phages SP01 and SP82G (these include lytic and temperate phage). They do not protect against phages phi105, rho10 or rho14. Additionally confers a very slight reduction in efficiency of plasmid transformation. This chain is BREX protein BrxA, found in Bacillus cereus (strain H3081.97).